Here is a 493-residue protein sequence, read N- to C-terminus: Glutamyl-tRNA(Gln) amidotransferase subunit A (493 aa).

Active-site charge relay system residues include lysine 78 and serine 158. Serine 182 acts as the Acyl-ester intermediate in catalysis.

This sequence belongs to the amidase family. GatA subfamily. Heterotrimer of A, B and C subunits.

The catalysed reaction is L-glutamyl-tRNA(Gln) + L-glutamine + ATP + H2O = L-glutaminyl-tRNA(Gln) + L-glutamate + ADP + phosphate + H(+). In terms of biological role, allows the formation of correctly charged Gln-tRNA(Gln) through the transamidation of misacylated Glu-tRNA(Gln) in organisms which lack glutaminyl-tRNA synthetase. The reaction takes place in the presence of glutamine and ATP through an activated gamma-phospho-Glu-tRNA(Gln). The sequence is that of Glutamyl-tRNA(Gln) amidotransferase subunit A from Rickettsia typhi (strain ATCC VR-144 / Wilmington).